Reading from the N-terminus, the 304-residue chain is NADH-cytochrome b5 reductase 2 (304 aa).

Residues 9-29 traverse the membrane as a helical segment; the sequence is MLVALAVIGVTVLLFLIKALG. The FAD-binding FR-type domain maps to 43–155; that stretch reads NAKYPLPLIE…RGPNGLLVYK (113 aa). FAD is bound by residues 135–150 and 174–209; these read DSLKIGETIDFRGPNG and VAKHVGMLAGGTGITPMLQLIRQITQDPNDNTKCSL.

The protein belongs to the flavoprotein pyridine nucleotide cytochrome reductase family. FAD serves as cofactor.

Its subcellular location is the membrane. It catalyses the reaction 2 Fe(III)-[cytochrome b5] + NADH = 2 Fe(II)-[cytochrome b5] + NAD(+) + H(+). Functionally, NADH-cytochrome b5 reductases are involved in desaturation and elongation of fatty acids, cholesterol biosynthesis and drug metabolism. The chain is NADH-cytochrome b5 reductase 2 (cyb5r2) from Xenopus tropicalis (Western clawed frog).